We begin with the raw amino-acid sequence, 630 residues long: Golgin subfamily A member 8K (630 aa).

The segment at 1–76 (MAEETQHNKL…TSSATLKDLE (76 aa)) is disordered. Coiled-coil stretches lie at residues 86–148 (LDSR…LNTD) and 224–411 (LTQL…QQNQ). Residues 352–362 (KQEERIQEQHK) show a composition bias toward basic and acidic residues. 2 disordered regions span residues 352-379 (KQEE…EPNN) and 424-444 (GEGH…PMPS).

It belongs to the GOLGA8 family.

The protein is Golgin subfamily A member 8K of Homo sapiens (Human).